Consider the following 180-residue polypeptide: Ribulose bisphosphate carboxylase small subunit, chloroplastic (180 aa).

The N-terminal 56 residues, 1 to 56 (MASSVLSSAAVATRSNVAQANMVAPFTGLKSAASFPVSRKQNLDITSIASNGGRVQ), are a transit peptide targeting the chloroplast.

It belongs to the RuBisCO small chain family. As to quaternary structure, heterohexadecamer of 8 large and 8 small subunits.

The protein localises to the plastid. Its subcellular location is the chloroplast. Its function is as follows. RuBisCO catalyzes two reactions: the carboxylation of D-ribulose 1,5-bisphosphate, the primary event in carbon dioxide fixation, as well as the oxidative fragmentation of the pentose substrate. Both reactions occur simultaneously and in competition at the same active site. Although the small subunit is not catalytic it is essential for maximal activity. The sequence is that of Ribulose bisphosphate carboxylase small subunit, chloroplastic from Nicotiana plumbaginifolia (Leadwort-leaved tobacco).